The primary structure comprises 299 residues: Protoheme IX farnesyltransferase (299 aa).

Transmembrane regions (helical) follow at residues valine 25 to valine 45, tryptophan 47 to valine 67, alanine 95 to phenylalanine 115, leucine 119 to leucine 139, isoleucine 147 to glycine 167, proline 173 to isoleucine 193, valine 218 to histidine 238, leucine 243 to tyrosine 263, and isoleucine 279 to isoleucine 299.

Belongs to the UbiA prenyltransferase family. Protoheme IX farnesyltransferase subfamily.

The protein resides in the cell inner membrane. The catalysed reaction is heme b + (2E,6E)-farnesyl diphosphate + H2O = Fe(II)-heme o + diphosphate. Its pathway is porphyrin-containing compound metabolism; heme O biosynthesis; heme O from protoheme: step 1/1. Converts heme B (protoheme IX) to heme O by substitution of the vinyl group on carbon 2 of heme B porphyrin ring with a hydroxyethyl farnesyl side group. The protein is Protoheme IX farnesyltransferase of Ectopseudomonas mendocina (strain ymp) (Pseudomonas mendocina).